The chain runs to 348 residues: Nicotinate-nucleotide--dimethylbenzimidazole phosphoribosyltransferase (348 aa).

The Proton acceptor role is filled by Glu317.

Belongs to the CobT family.

It catalyses the reaction 5,6-dimethylbenzimidazole + nicotinate beta-D-ribonucleotide = alpha-ribazole 5'-phosphate + nicotinate + H(+). The protein operates within nucleoside biosynthesis; alpha-ribazole biosynthesis; alpha-ribazole from 5,6-dimethylbenzimidazole: step 1/2. Its function is as follows. Catalyzes the synthesis of alpha-ribazole-5'-phosphate from nicotinate mononucleotide (NAMN) and 5,6-dimethylbenzimidazole (DMB). In Clostridioides difficile (strain 630) (Peptoclostridium difficile), this protein is Nicotinate-nucleotide--dimethylbenzimidazole phosphoribosyltransferase.